Reading from the N-terminus, the 382-residue chain is Calcium/calmodulin-dependent protein kinase (382 aa).

A Protein kinase domain is found at 23-278 (YKFGRTLGAG…SKEALGHIWL (256 aa)). ATP-binding positions include 29–37 (LGAGTYGVV) and lysine 50. Aspartate 142 (proton acceptor) is an active-site residue. Positions 291 to 301 (ELEAYRRRARL) are calmodulin-binding. Disordered regions lie at residues 318–344 (KEHE…GDGS) and 359–382 (QKQE…FSNA).

It belongs to the protein kinase superfamily. CAMK Ser/Thr protein kinase family. CaMK subfamily.

The catalysed reaction is L-seryl-[protein] + ATP = O-phospho-L-seryl-[protein] + ADP + H(+). It carries out the reaction L-threonyl-[protein] + ATP = O-phospho-L-threonyl-[protein] + ADP + H(+). In Metarhizium anisopliae (Entomophthora anisopliae), this protein is Calcium/calmodulin-dependent protein kinase.